We begin with the raw amino-acid sequence, 248 residues long: Coproheme decarboxylase (248 aa).

Residues Arg-130, Tyr-144 to Lys-148, His-171, Gln-184, and Ser-222 each bind Fe-coproporphyrin III. Tyr-144 is a catalytic residue.

Belongs to the ChdC family. Type 1 subfamily. Requires Fe-coproporphyrin III as cofactor.

It carries out the reaction Fe-coproporphyrin III + 2 H2O2 + 2 H(+) = heme b + 2 CO2 + 4 H2O. The enzyme catalyses Fe-coproporphyrin III + H2O2 + H(+) = harderoheme III + CO2 + 2 H2O. It catalyses the reaction harderoheme III + H2O2 + H(+) = heme b + CO2 + 2 H2O. The protein operates within porphyrin-containing compound metabolism; protoheme biosynthesis. Functionally, involved in coproporphyrin-dependent heme b biosynthesis. Catalyzes the decarboxylation of Fe-coproporphyrin III (coproheme) to heme b (protoheme IX), the last step of the pathway. The reaction occurs in a stepwise manner with a three-propionate intermediate. This Geobacillus thermodenitrificans (strain NG80-2) protein is Coproheme decarboxylase.